The primary structure comprises 88 residues: Small ribosomal subunit protein bS20 (88 aa).

The segment at 1-27 (MANSKSAKKRALQSEKRRQHNASRRSM) is disordered.

This sequence belongs to the bacterial ribosomal protein bS20 family.

In terms of biological role, binds directly to 16S ribosomal RNA. The polypeptide is Small ribosomal subunit protein bS20 (Shewanella putrefaciens (strain CN-32 / ATCC BAA-453)).